The following is a 160-amino-acid chain: Large ribosomal subunit protein uL22c (160 aa).

It belongs to the universal ribosomal protein uL22 family. As to quaternary structure, part of the 50S ribosomal subunit.

The protein localises to the plastid. Its subcellular location is the chloroplast. Its function is as follows. This protein binds specifically to 23S rRNA. In terms of biological role, the globular domain of the protein is located near the polypeptide exit tunnel on the outside of the subunit, while an extended beta-hairpin is found that lines the wall of the exit tunnel in the center of the 70S ribosome. In Crucihimalaya wallichii (Rock-cress), this protein is Large ribosomal subunit protein uL22c (rpl22).